The sequence spans 807 residues: Glycerol-3-phosphate acyltransferase (807 aa).

The short motif at 309–314 (CHRSHM) is the HXXXXD motif element.

The protein belongs to the GPAT/DAPAT family.

Its subcellular location is the cell inner membrane. The enzyme catalyses sn-glycerol 3-phosphate + an acyl-CoA = a 1-acyl-sn-glycero-3-phosphate + CoA. It participates in phospholipid metabolism; CDP-diacylglycerol biosynthesis; CDP-diacylglycerol from sn-glycerol 3-phosphate: step 1/3. This Aeromonas hydrophila subsp. hydrophila (strain ATCC 7966 / DSM 30187 / BCRC 13018 / CCUG 14551 / JCM 1027 / KCTC 2358 / NCIMB 9240 / NCTC 8049) protein is Glycerol-3-phosphate acyltransferase.